A 271-amino-acid polypeptide reads, in one-letter code: 5-deoxy-glucuronate isomerase (271 aa).

Belongs to the isomerase IolB family.

It catalyses the reaction 5-deoxy-D-glucuronate = 5-dehydro-2-deoxy-D-gluconate. The protein operates within polyol metabolism; myo-inositol degradation into acetyl-CoA; acetyl-CoA from myo-inositol: step 4/7. In terms of biological role, involved in the isomerization of 5-deoxy-glucuronate (5DG) to 5-dehydro-2-deoxy-D-gluconate (DKG or 2-deoxy-5-keto-D-gluconate). The sequence is that of 5-deoxy-glucuronate isomerase from Bacillus subtilis subsp. natto.